The primary structure comprises 352 residues: Isopentenyl-diphosphate delta-isomerase (352 aa).

A substrate-binding site is contributed by 6 to 7 (RK). FMN is bound by residues 63 to 65 (AMT), Ser93, and Asn122. Residue 93-95 (SQR) coordinates substrate. Position 160 (Gln160) interacts with substrate. Glu161 provides a ligand contact to Mg(2+). Residues Lys192, Thr221, 271–273 (GIR), and 292–293 (SQ) contribute to the FMN site.

Belongs to the IPP isomerase type 2 family. As to quaternary structure, homooctamer. Dimer of tetramers. Requires FMN as cofactor. NADPH serves as cofactor. Mg(2+) is required as a cofactor.

It localises to the cytoplasm. The enzyme catalyses isopentenyl diphosphate = dimethylallyl diphosphate. Its function is as follows. Involved in the biosynthesis of isoprenoids. Catalyzes the 1,3-allylic rearrangement of the homoallylic substrate isopentenyl (IPP) to its allylic isomer, dimethylallyl diphosphate (DMAPP). The polypeptide is Isopentenyl-diphosphate delta-isomerase (Pyrobaculum aerophilum (strain ATCC 51768 / DSM 7523 / JCM 9630 / CIP 104966 / NBRC 100827 / IM2)).